We begin with the raw amino-acid sequence, 307 residues long: Small ribosomal subunit biogenesis GTPase RsgA (307 aa).

In terms of domain architecture, CP-type G spans 80-237 (KADLRQTIVS…IVDTPGIKEF (158 aa)). GTP contacts are provided by residues 129 to 132 (NKID) and 180 to 188 (GQSGVGKSS). Zn(2+) contacts are provided by Cys-261, Cys-266, His-268, and Cys-274.

Belongs to the TRAFAC class YlqF/YawG GTPase family. RsgA subfamily. As to quaternary structure, monomer. Associates with 30S ribosomal subunit, binds 16S rRNA. It depends on Zn(2+) as a cofactor.

The protein localises to the cytoplasm. Functionally, one of several proteins that assist in the late maturation steps of the functional core of the 30S ribosomal subunit. Helps release RbfA from mature subunits. May play a role in the assembly of ribosomal proteins into the subunit. Circularly permuted GTPase that catalyzes slow GTP hydrolysis, GTPase activity is stimulated by the 30S ribosomal subunit. This Borreliella burgdorferi (strain ATCC 35210 / DSM 4680 / CIP 102532 / B31) (Borrelia burgdorferi) protein is Small ribosomal subunit biogenesis GTPase RsgA.